Consider the following 118-residue polypeptide: Small ribosomal subunit protein uS13 (118 aa).

The segment at 94-118 (GLPVHGQRTKTNARTRKGPAKSITR) is disordered.

It belongs to the universal ribosomal protein uS13 family. Part of the 30S ribosomal subunit. Forms a loose heterodimer with protein S19. Forms two bridges to the 50S subunit in the 70S ribosome.

In terms of biological role, located at the top of the head of the 30S subunit, it contacts several helices of the 16S rRNA. In the 70S ribosome it contacts the 23S rRNA (bridge B1a) and protein L5 of the 50S subunit (bridge B1b), connecting the 2 subunits; these bridges are implicated in subunit movement. Contacts the tRNAs in the A and P-sites. The protein is Small ribosomal subunit protein uS13 of Acidithiobacillus ferrooxidans (strain ATCC 23270 / DSM 14882 / CIP 104768 / NCIMB 8455) (Ferrobacillus ferrooxidans (strain ATCC 23270)).